The chain runs to 234 residues: Peptidyl-prolyl cis-trans isomerase, rhodopsin-specific isozyme (234 aa).

The N-terminal stretch at 1-19 is a signal peptide; that stretch reads MNILKILILLELIYTCVSG. Residues 29–187 enclose the PPIase cyclophilin-type domain; that stretch reads YMDVKHQKKP…DPVIIVNCGE (159 aa). Asn67 carries an N-linked (GlcNAc...) asparagine glycan. A helical membrane pass occupies residues 202–222; it reads ILGWIKAAGLPFCSSFIVLMI.

The protein belongs to the cyclophilin-type PPIase family. As to expression, expressed specifically in photoreceptor cells.

Its subcellular location is the membrane. The enzyme catalyses [protein]-peptidylproline (omega=180) = [protein]-peptidylproline (omega=0). Its function is as follows. PPIases accelerate the folding of proteins. It catalyzes the cis-trans isomerization of proline imidic peptide bonds in oligopeptides. Acts on the folding of rhodopsin RH1 and RH2 (but not RH3) and is required for visual transduction. The chain is Peptidyl-prolyl cis-trans isomerase, rhodopsin-specific isozyme (NINAA) from Calliphora vicina (Blue blowfly).